Here is a 115-residue protein sequence, read N- to C-terminus: Non-specific lipid-transfer protein Cw18 (115 aa).

The first 25 residues, M1–A25, serve as a signal peptide directing secretion. 4 disulfide bridges follow: C29–C77, C39–C54, C55–C97, and C75–C111.

Belongs to the plant LTP family. In terms of tissue distribution, highly expressed in leaves and coleoptiles. No expression in roots.

Its function is as follows. Plant non-specific lipid-transfer proteins transfer phospholipids as well as galactolipids across membranes. May play a role in wax or cutin deposition in the cell walls of expanding epidermal cells and certain secretory tissues. The protein is Non-specific lipid-transfer protein Cw18 (CW18) of Hordeum vulgare (Barley).